The chain runs to 266 residues: Cysteine-rich repeat secretory protein 41 (266 aa).

The signal sequence occupies residues 1 to 26 (MSSVFGSVHILAMIAIQLLLTHSVSS). 2 Gnk2-homologous domains span residues 33 to 136 (YLHH…SVAS) and 142 to 253 (YEND…LYPF).

The protein belongs to the cysteine-rich repeat secretory protein family.

It localises to the secreted. The polypeptide is Cysteine-rich repeat secretory protein 41 (CRRSP41) (Arabidopsis thaliana (Mouse-ear cress)).